The following is a 760-amino-acid chain: Armadillo-like helical domain-containing protein 4 (760 aa).

The first 27 residues, 1–27 (MSRPIVLHICLAFCSLLLLNFAAQCLA), serve as a signal peptide directing secretion. Topologically, residues 28–700 (FPNLERREIV…KDKAGYMSGM (673 aa)) are extracellular. 6 disordered regions span residues 49-69 (LNTDDLENDSVTSNTPVSGDP), 117-143 (GEEVFGSSQPERMSPESRPSKATLTNP), 216-243 (RTEKFEANPEHKTTSFPGSKLTAGTEPS), 373-392 (HGGERASDQSSVTPTSPMGD), 474-495 (TRGEDETKGGRELPSATVDAPR), and 536-652 (NEEL…SQEP). The N-linked (GlcNAc...) asparagine glycan is linked to asparagine 56. Residues 216–228 (RTEKFEANPEHKT) are compositionally biased toward basic and acidic residues. Over residues 380–390 (DQSSVTPTSPM) the composition is skewed to polar residues. Residues 474–484 (TRGEDETKGGR) are compositionally biased toward basic and acidic residues. Residues 594–635 (LESEEGEDDEDEEDEEEEDEEEEDEEEDEEDKDADSLDEALG) show a composition bias toward acidic residues. A helical transmembrane segment spans residues 701–721 (LVPVGVGIAGALFILGALYSI). The Cytoplasmic portion of the chain corresponds to 722–760 (KVMNRRRRNGFKRHKRKQREFNSMQDRVMLLADSSEDEF). Serine 755 and serine 756 each carry phosphoserine.

In terms of assembly, interacts with IL6ST; this interaction prevents IL6ST protein homodimerization and bridges ARMH4 with IL6R and STAT3 and therefore inhibits phosphorylation of STAT3 at 'Tyr-705'. Interacts (via cytoplasmic tail) with RICTOR; this interaction bridges ARMH4 to the mTORC2 complex and inhibits the mTORC2 kinase activity.

It is found in the membrane. In terms of biological role, may modulate immune response and may play a role in inflammation. Down-modulates STAT3 signaling throught direct interaction with IL6ST, resulting in the inhibition of phosphorylation of STAT3 at Tyr-705. May negatively regulates AKT signaling by modulating the activity of mTORC2 complex through RICTOR interaction. This Bos taurus (Bovine) protein is Armadillo-like helical domain-containing protein 4.